Reading from the N-terminus, the 262-residue chain is Ribosome-recycling factor, mitochondrial (262 aa).

Residues 1–55 (MALGLRCFRLVHPAFCNSLAALTRPVSEVTLQTVRGRQNDHGQCMAYAAVPVRHF) constitute a mitochondrion transit peptide.

The protein belongs to the RRF family.

The protein localises to the mitochondrion. Functionally, responsible for the disassembly of ribosomes from messenger RNA at the termination of mitochondrial protein biosynthesis. Acts in collaboration with GFM2. Promotes mitochondrial ribosome recycling by dissolution of intersubunit contacts. This chain is Ribosome-recycling factor, mitochondrial (MRRF), found in Bos taurus (Bovine).